The following is a 360-amino-acid chain: GTPase Obg (360 aa).

The Obg domain occupies 1 to 156; the sequence is MFVDSVEIII…KCVRLELKLI (156 aa). The OBG-type G domain maps to 157 to 360; sequence ADIGLVGFPN…LKFVLLKALP (204 aa). Residues 163 to 170, 188 to 192, 210 to 213, 279 to 282, and 341 to 343 contribute to the GTP site; these read GFPNAGKS, FTTLV, DIPG, NKCD, and SAV. Residues Ser-170 and Thr-190 each coordinate Mg(2+).

This sequence belongs to the TRAFAC class OBG-HflX-like GTPase superfamily. OBG GTPase family. As to quaternary structure, monomer. It depends on Mg(2+) as a cofactor.

It localises to the cytoplasm. Functionally, an essential GTPase which binds GTP, GDP and possibly (p)ppGpp with moderate affinity, with high nucleotide exchange rates and a fairly low GTP hydrolysis rate. Plays a role in control of the cell cycle, stress response, ribosome biogenesis and in those bacteria that undergo differentiation, in morphogenesis control. This is GTPase Obg from Helicobacter pylori (strain G27).